The sequence spans 188 residues: Probable nicotinate-nucleotide adenylyltransferase (188 aa).

Belongs to the NadD family.

The enzyme catalyses nicotinate beta-D-ribonucleotide + ATP + H(+) = deamido-NAD(+) + diphosphate. It participates in cofactor biosynthesis; NAD(+) biosynthesis; deamido-NAD(+) from nicotinate D-ribonucleotide: step 1/1. Catalyzes the reversible adenylation of nicotinate mononucleotide (NaMN) to nicotinic acid adenine dinucleotide (NaAD). In Listeria innocua serovar 6a (strain ATCC BAA-680 / CLIP 11262), this protein is Probable nicotinate-nucleotide adenylyltransferase.